The primary structure comprises 581 residues: Arginine--tRNA ligase (581 aa).

The short motif at 131–141 is the 'HIGH' region element; the sequence is ANPTGPLHVGH.

Belongs to the class-I aminoacyl-tRNA synthetase family. Monomer.

It is found in the cytoplasm. It carries out the reaction tRNA(Arg) + L-arginine + ATP = L-arginyl-tRNA(Arg) + AMP + diphosphate. In Ruegeria pomeroyi (strain ATCC 700808 / DSM 15171 / DSS-3) (Silicibacter pomeroyi), this protein is Arginine--tRNA ligase.